The primary structure comprises 105 residues: Pyrimidine/purine nucleoside phosphorylase (105 aa).

This sequence belongs to the nucleoside phosphorylase PpnP family.

It catalyses the reaction a purine D-ribonucleoside + phosphate = a purine nucleobase + alpha-D-ribose 1-phosphate. The enzyme catalyses adenosine + phosphate = alpha-D-ribose 1-phosphate + adenine. It carries out the reaction cytidine + phosphate = cytosine + alpha-D-ribose 1-phosphate. The catalysed reaction is guanosine + phosphate = alpha-D-ribose 1-phosphate + guanine. It catalyses the reaction inosine + phosphate = alpha-D-ribose 1-phosphate + hypoxanthine. The enzyme catalyses thymidine + phosphate = 2-deoxy-alpha-D-ribose 1-phosphate + thymine. It carries out the reaction uridine + phosphate = alpha-D-ribose 1-phosphate + uracil. The catalysed reaction is xanthosine + phosphate = alpha-D-ribose 1-phosphate + xanthine. Functionally, catalyzes the phosphorolysis of diverse nucleosides, yielding D-ribose 1-phosphate and the respective free bases. Can use uridine, adenosine, guanosine, cytidine, thymidine, inosine and xanthosine as substrates. Also catalyzes the reverse reactions. The sequence is that of Pyrimidine/purine nucleoside phosphorylase from Delftia acidovorans (strain DSM 14801 / SPH-1).